The following is a 1227-amino-acid chain: MDGTNERRSGLMAFEQFLSAEEIKAVQLAEAHSDKQQKRTAEQIEAIYTHGQNVLVSASAGSGKTFVMVQRILDKLKRGIGIDQLFISTFTVKAAGELKERIEKKLNETIAETTDMELRRHLSAQLADLTKADIGTMDSFTQKLVTTYGYSLGISPQFRILQDETEKASLKKEVFDQLFADYLEEDENGAFRKLVRNFSGNRKDNSGFRQVVYQVHDFSQSTSSPTKWLKEQAVQADLYSQERIEQMLEQGFKEKVLDKLYQAADFFRYHVEWGRNDFGSAKYFANVEEVLDLLTGLDSLDQKDLMERVERILLINNQSRGKGLTNANRPKDEHLIAFKEEYNAGKSQIISELRDLGQEVYELTLLKDYQVQALPLLILLRDFVLDFSQAYLDVKIKEAAFEFGDIGHFAIRILEENADIRQFFQEKYHEVMVDEYQDNNHSQERMLDLLSNGHNRFMVGDIKQSIYRFRQADPMIFQEKFELYQANPQSGKLILLKENFRSQIEVLEATNAIFTRLMDRQVGEIKYDDTHSLVAGSPGQKIAQPKNEMEYLIYDQQDSANSSTDAEEETPLTAGEIEVVAKEIIRLHNEEGADFKDITLLVQKRTHNDLIMSIFEKHGIPIVADGGAASYLQSLEVMIMLDTLRVINNPLNDYALVALLKSPMFRFDEDELTRISLQAGTGFFYQKMEIAQQASGQHPELMSEKLKKKITDFLSILENWRAYAKLHSIYDMIWKMFNEKFYYDYVGALPNGSKRQANLYALGLRANQFEKTGYKGLSRFIAMIDRALANDKDLADVQEFLPQNAVQLMTIHKSKGLEFKYVFLMNIDKRFNLEDHYQSVIISRKNGLGIQYLADMKDKVNSPLPQVRVLMNTLPYQNNLQELKIANLSEQMRLLYVALTRAEKKLYLVGKGNADKLAEKYDGKKENGVLAQSTRESMATFQDWILAIDEAFSGEDLHFKKVFVTDEDLTEEKIGKLTLKSKLEDASLKDIRQSEDIAQALDQLSSVQELNERYKAAIELPSLRTPSQIKKLYEPILEQEGMEVMEKYQPKRTFNLPDFSKKPKITGAQVGSAVHELMQRLDLSWLVTEDTVRAALEAVHAEQAIKDKINVQMILDFFDTDLGREILANTDKLHREAPFASLQTDSVSQENFVLRGIIDGYLLYDDHIVLFDYKTDKYDQPIQLSQRYQAQMQLYAEALKKAYKIDRVDCHLILLGGERIEVVEVNI.

Residues 37–503 form the UvrD-like helicase ATP-binding domain; that stretch reads QKRTAEQIEA…ILLKENFRSQ (467 aa). 58-65 serves as a coordination point for ATP; the sequence is ASAGSGKT. The UvrD-like helicase C-terminal domain maps to 532 to 816; sequence SLVAGSPGQK…QLMTIHKSKG (285 aa).

It belongs to the helicase family. AddA subfamily. As to quaternary structure, heterodimer of AddA and AddB/RexB. The cofactor is Mg(2+).

It catalyses the reaction Couples ATP hydrolysis with the unwinding of duplex DNA by translocating in the 3'-5' direction.. The enzyme catalyses ATP + H2O = ADP + phosphate + H(+). Its function is as follows. The heterodimer acts as both an ATP-dependent DNA helicase and an ATP-dependent, dual-direction single-stranded exonuclease. Recognizes the chi site generating a DNA molecule suitable for the initiation of homologous recombination. The AddA nuclease domain is required for chi fragment generation; this subunit has the helicase and 3' -&gt; 5' nuclease activities. This is ATP-dependent helicase/nuclease subunit A from Streptococcus suis (strain 98HAH33).